A 271-amino-acid chain; its full sequence is MSRIQQTFAALAEQGRKGLIPFITAGDPDPAKTVEFMHALAAGGADVIELGVPFSDPMADGPVIQRSSERALARGVTLKSVLADVKRFRETDPKTPVVLMGYANPIERMGVDAFAAEAHAAGVDGVLVVDYPPEEAGVFAEKMRAAQIDPIFLLAPTSTDERIADVGKIASGYVYYVSLKGVTGAGNLDVSSIAGKIPAIKSRVPVPVGVGFGIRDAETARAVAEVSDAVVIGSRLVQLLESAAPEGAAAALKTFIAELRAALDGAGKTAR.

Residues Glu49 and Asp60 each act as proton acceptor in the active site.

This sequence belongs to the TrpA family. Tetramer of two alpha and two beta chains.

It carries out the reaction (1S,2R)-1-C-(indol-3-yl)glycerol 3-phosphate + L-serine = D-glyceraldehyde 3-phosphate + L-tryptophan + H2O. It functions in the pathway amino-acid biosynthesis; L-tryptophan biosynthesis; L-tryptophan from chorismate: step 5/5. Its function is as follows. The alpha subunit is responsible for the aldol cleavage of indoleglycerol phosphate to indole and glyceraldehyde 3-phosphate. In Burkholderia cenocepacia (strain ATCC BAA-245 / DSM 16553 / LMG 16656 / NCTC 13227 / J2315 / CF5610) (Burkholderia cepacia (strain J2315)), this protein is Tryptophan synthase alpha chain.